The primary structure comprises 278 residues: Large ribosomal subunit protein uL2 (278 aa).

Disordered stretches follow at residues 32-54 (SLCR…TRHI) and 221-278 (RGMT…RNAK). Over residues 232–245 (NGGGEGKSKSGGGR) the composition is skewed to gly residues.

Belongs to the universal ribosomal protein uL2 family. In terms of assembly, part of the 50S ribosomal subunit. Forms a bridge to the 30S subunit in the 70S ribosome.

Functionally, one of the primary rRNA binding proteins. Required for association of the 30S and 50S subunits to form the 70S ribosome, for tRNA binding and peptide bond formation. It has been suggested to have peptidyltransferase activity; this is somewhat controversial. Makes several contacts with the 16S rRNA in the 70S ribosome. This is Large ribosomal subunit protein uL2 from Akkermansia muciniphila (strain ATCC BAA-835 / DSM 22959 / JCM 33894 / BCRC 81048 / CCUG 64013 / CIP 107961 / Muc).